We begin with the raw amino-acid sequence, 171 residues long: NADH-quinone oxidoreductase subunit B (171 aa).

Residues Cys-39, Cys-40, Cys-105, and Cys-134 each contribute to the [4Fe-4S] cluster site.

The protein belongs to the complex I 20 kDa subunit family. NDH-1 is composed of 14 different subunits. Subunits NuoB, C, D, E, F, and G constitute the peripheral sector of the complex. Requires [4Fe-4S] cluster as cofactor.

The protein resides in the cell inner membrane. It catalyses the reaction a quinone + NADH + 5 H(+)(in) = a quinol + NAD(+) + 4 H(+)(out). In terms of biological role, NDH-1 shuttles electrons from NADH, via FMN and iron-sulfur (Fe-S) centers, to quinones in the respiratory chain. The immediate electron acceptor for the enzyme in this species is believed to be ubiquinone. Couples the redox reaction to proton translocation (for every two electrons transferred, four hydrogen ions are translocated across the cytoplasmic membrane), and thus conserves the redox energy in a proton gradient. The chain is NADH-quinone oxidoreductase subunit B from Aliarcobacter butzleri (strain RM4018) (Arcobacter butzleri).